Reading from the N-terminus, the 541-residue chain is 2-hydroxyacylsphingosine 1-beta-galactosyltransferase (541 aa).

The signal sequence occupies residues Met1 to Ala20. 3 N-linked (GlcNAc...) asparagine glycosylation sites follow: Asn78, Asn333, and Asn442. Residues Tyr472–Val492 form a helical membrane-spanning segment.

Belongs to the UDP-glycosyltransferase family. In terms of tissue distribution, brain, restricted to the oligodendrocyte-containing cell layers of cerebrum and cerebellum.

It localises to the membrane. The protein resides in the endoplasmic reticulum. The enzyme catalyses an N-acylsphing-4-enine + UDP-alpha-D-galactose = a beta-D-galactosyl-(1&lt;-&gt;1')-N-acylsphing-4-enine + UDP + H(+). It carries out the reaction N-(2-hydroxy-hexanoyl)-sphing-4-enine + UDP-alpha-D-galactose = N-(2-hydroxy-hexanoyl)-beta-D-galactosyl-sphing-4-enine + UDP + H(+). It catalyses the reaction N-(2-hydroxy-hexanoyl)-sphinganine + UDP-alpha-D-galactose = N-(2-hydroxyhexanoyl)-beta-D-galactosylsphinganine + UDP + H(+). The catalysed reaction is an N-acyl-sphingoid base + UDP-alpha-D-galactose = a D-galactosylceramide + UDP + H(+). Its pathway is sphingolipid metabolism; galactosylceramide biosynthesis. In terms of biological role, catalyzes the transfer of galactose to ceramide, a key enzymatic step in the biosynthesis of galactocerebrosides, which are abundant sphingolipids of the myelin membrane of the central nervous system and peripheral nervous system. Galactosylates both hydroxy- and non-hydroxy fatty acid-containing ceramides and diglycerides. This chain is 2-hydroxyacylsphingosine 1-beta-galactosyltransferase, found in Rattus norvegicus (Rat).